The following is a 328-amino-acid chain: Tetraacyldisaccharide 4'-kinase (328 aa).

Residue 55–62 (TAGGNGKT) coordinates ATP.

Belongs to the LpxK family.

The catalysed reaction is a lipid A disaccharide + ATP = a lipid IVA + ADP + H(+). It functions in the pathway glycolipid biosynthesis; lipid IV(A) biosynthesis; lipid IV(A) from (3R)-3-hydroxytetradecanoyl-[acyl-carrier-protein] and UDP-N-acetyl-alpha-D-glucosamine: step 6/6. In terms of biological role, transfers the gamma-phosphate of ATP to the 4'-position of a tetraacyldisaccharide 1-phosphate intermediate (termed DS-1-P) to form tetraacyldisaccharide 1,4'-bis-phosphate (lipid IVA). This Escherichia coli O81 (strain ED1a) protein is Tetraacyldisaccharide 4'-kinase.